A 305-amino-acid chain; its full sequence is Glutaminase (305 aa).

Substrate is bound by residues serine 61, asparagine 113, glutamate 158, asparagine 165, tyrosine 189, tyrosine 241, and valine 259.

It belongs to the glutaminase family. Homotetramer.

The catalysed reaction is L-glutamine + H2O = L-glutamate + NH4(+). This Clostridium botulinum (strain Kyoto / Type A2) protein is Glutaminase.